The primary structure comprises 148 residues: Large ribosomal subunit protein bL9 (148 aa).

Belongs to the bacterial ribosomal protein bL9 family.

In terms of biological role, binds to the 23S rRNA. In Salinispora arenicola (strain CNS-205), this protein is Large ribosomal subunit protein bL9.